Here is a 376-residue protein sequence, read N- to C-terminus: DNA repair protein RAD51 homolog 3 (376 aa).

A required for Holliday junction resolution activity region spans residues 1–126 (MRGKTFRFEM…LMKTTEICGA (126 aa)). Phosphoserine is present on serine 20. Residues 79–136 (SESHKKCTALELLEQEHTQGFIITFCSALDDILGGGVPLMKTTEICGAPGVGKTQLCM) form an interaction with RAD51B, RAD51D and XRCC3 region. 125–132 (GAPGVGKT) is a binding site for ATP. The Nuclear localization signal signature appears at 366–370 (RKRSR).

It belongs to the RecA family. RAD51 subfamily. As to quaternary structure, part of the RAD51 paralog protein complexes BCDX2 and CX3; the complexes have a ring-like structure arranged into a flat disc around a central channel. The BCDX2 complex consits of RAD51B, RAD51C, RAD51D and XRCC2; the CX3 complex consists of RAD51C and XRCC3. The BCDX2 subcomplex RAD51B:RAD51C interacts with RAD51. Interacts with SWSAP1; involved in homologous recombination repair. Interacts directly with PALB2 which may serve as a scaffold for a HR complex containing PALB2, BRCA2, RAD51C, RAD51 and XRCC3. Interacts with HELQ. Interacts with DNA damage up-regulated protein DDUP. In terms of tissue distribution, expressed in a variety of tissues, with highest expression in testis, heart muscle, spleen and prostate.

The protein resides in the nucleus. The protein localises to the cytoplasm. It localises to the perinuclear region. Its subcellular location is the mitochondrion. Essential for the homologous recombination (HR) pathway of DNA repair. Involved in the homologous recombination repair (HRR) pathway of double-stranded DNA breaks arising during DNA replication or induced by DNA-damaging agents. Part of the RAD51 paralog protein complexes BCDX2 and CX3 which act at different stages of the BRCA1-BRCA2-dependent HR pathway. Upon DNA damage, BCDX2 seems to act downstream of BRCA2 recruitment and upstream of RAD51 recruitment; CX3 seems to act downstream of RAD51 recruitment; both complexes bind predominantly to the intersection of the four duplex arms of the Holliday junction (HJ) and to junction of replication forks. The BCDX2 complex was originally reported to bind single-stranded DNA, single-stranded gaps in duplex DNA and specifically to nicks in duplex DNA. The BCDX2 subcomplex RAD51B:RAD51C exhibits single-stranded DNA-dependent ATPase activity suggesting an involvement in early stages of the HR pathway. Involved in RAD51 foci formation in response to DNA damage suggesting an involvement in early stages of HR probably in the invasion step. Has an early function in DNA repair in facilitating phosphorylation of the checkpoint kinase CHEK2 and thereby transduction of the damage signal, leading to cell cycle arrest and HR activation. Participates in branch migration and HJ resolution and thus is important for processing HR intermediates late in the DNA repair process; the function may be linked to the CX3 complex. Part of a PALB2-scaffolded HR complex containing BRCA2 and which is thought to play a role in DNA repair by HR. Protects RAD51 from ubiquitin-mediated degradation that is enhanced following DNA damage. Plays a role in regulating mitochondrial DNA copy number under conditions of oxidative stress in the presence of RAD51 and XRCC3. Contributes to DNA cross-link resistance, sister chromatid cohesion and genomic stability. Involved in maintaining centrosome number in mitosis. This chain is DNA repair protein RAD51 homolog 3 (RAD51C), found in Homo sapiens (Human).